The primary structure comprises 380 residues: Cytochrome b (380 aa).

4 helical membrane-spanning segments follow: residues F34–M54, W78–I99, W114–L134, and F179–T199. H84 and H98 together coordinate heme b. Residues H183 and H197 each contribute to the heme b site. H202 contacts a ubiquinone. 4 consecutive transmembrane segments (helical) span residues T227 to S247, L289 to H309, L321 to S341, and F348 to P368.

This sequence belongs to the cytochrome b family. As to quaternary structure, the cytochrome bc1 complex contains 11 subunits: 3 respiratory subunits (MT-CYB, CYC1 and UQCRFS1), 2 core proteins (UQCRC1 and UQCRC2) and 6 low-molecular weight proteins (UQCRH/QCR6, UQCRB/QCR7, UQCRQ/QCR8, UQCR10/QCR9, UQCR11/QCR10 and a cleavage product of UQCRFS1). This cytochrome bc1 complex then forms a dimer. It depends on heme b as a cofactor.

It is found in the mitochondrion inner membrane. Its function is as follows. Component of the ubiquinol-cytochrome c reductase complex (complex III or cytochrome b-c1 complex) that is part of the mitochondrial respiratory chain. The b-c1 complex mediates electron transfer from ubiquinol to cytochrome c. Contributes to the generation of a proton gradient across the mitochondrial membrane that is then used for ATP synthesis. This chain is Cytochrome b (MT-CYB), found in Pygoscelis papua (Gentoo penguin).